Here is a 133-residue protein sequence, read N- to C-terminus: CDGSH iron-sulfur domain-containing protein 2 homolog (133 aa).

At 1-35 (MEPISHLVKSSLPNYLSSLPIPDSVGGWFKLSFKD) the chain is on the lumenal side. Residues 36 to 58 (WLALIPPTVVVAGIGYTAYLAYC) traverse the membrane as a helical segment. Residues 59-133 (PAAKAICSAK…DNVGPIVIKK (75 aa)) are Cytoplasmic-facing. Positions 100, 102, 111, and 115 each coordinate [2Fe-2S] cluster.

This sequence belongs to the CISD protein family. CISD2 subfamily. [2Fe-2S] cluster serves as cofactor.

The protein resides in the endoplasmic reticulum membrane. The chain is CDGSH iron-sulfur domain-containing protein 2 homolog from Drosophila yakuba (Fruit fly).